The primary structure comprises 294 residues: Cytidine deaminase (294 aa).

CMP/dCMP-type deaminase domains lie at 48–168 and 186–294; these read DEDA…FGPK and LTGD…VLLG. 89 to 91 lines the substrate pocket; the sequence is NME. H102 provides a ligand contact to Zn(2+). E104 serves as the catalytic Proton donor. Zn(2+) is bound by residues C129 and C132.

Belongs to the cytidine and deoxycytidylate deaminase family. As to quaternary structure, homodimer. The cofactor is Zn(2+).

The enzyme catalyses cytidine + H2O + H(+) = uridine + NH4(+). It carries out the reaction 2'-deoxycytidine + H2O + H(+) = 2'-deoxyuridine + NH4(+). Its function is as follows. This enzyme scavenges exogenous and endogenous cytidine and 2'-deoxycytidine for UMP synthesis. In Salmonella dublin (strain CT_02021853), this protein is Cytidine deaminase.